Consider the following 428-residue polypeptide: Gamma-glutamyl phosphate reductase (428 aa).

This sequence belongs to the gamma-glutamyl phosphate reductase family.

It is found in the cytoplasm. It carries out the reaction L-glutamate 5-semialdehyde + phosphate + NADP(+) = L-glutamyl 5-phosphate + NADPH + H(+). The protein operates within amino-acid biosynthesis; L-proline biosynthesis; L-glutamate 5-semialdehyde from L-glutamate: step 2/2. Its function is as follows. Catalyzes the NADPH-dependent reduction of L-glutamate 5-phosphate into L-glutamate 5-semialdehyde and phosphate. The product spontaneously undergoes cyclization to form 1-pyrroline-5-carboxylate. The sequence is that of Gamma-glutamyl phosphate reductase from Clostridium tetani (strain Massachusetts / E88).